The chain runs to 283 residues: Shikimate dehydrogenase (NADP(+)) (283 aa).

Shikimate contacts are provided by residues 16 to 18 (SLS) and Thr-63. Residue Lys-67 is the Proton acceptor of the active site. Asp-79 contributes to the NADP(+) binding site. Shikimate is bound by residues Asn-88 and Asp-103. Residues 128–132 (GAGGA), Ala-223, and Gly-243 contribute to the NADP(+) site.

Belongs to the shikimate dehydrogenase family. In terms of assembly, homodimer.

It catalyses the reaction shikimate + NADP(+) = 3-dehydroshikimate + NADPH + H(+). It functions in the pathway metabolic intermediate biosynthesis; chorismate biosynthesis; chorismate from D-erythrose 4-phosphate and phosphoenolpyruvate: step 4/7. In terms of biological role, involved in the biosynthesis of the chorismate, which leads to the biosynthesis of aromatic amino acids. Catalyzes the reversible NADPH linked reduction of 3-dehydroshikimate (DHSA) to yield shikimate (SA). The sequence is that of Shikimate dehydrogenase (NADP(+)) from Xanthomonas campestris pv. campestris (strain 8004).